The following is a 228-amino-acid chain: THAP domain-containing protein 2 (228 aa).

A THAP-type zinc finger spans residues 1–80; that stretch reads MPTNCAAAGC…LKMDAVPTIF (80 aa). An HCFC1-binding motif (HBM) motif is present at residues 123-126; it reads EHSY.

The sequence is that of THAP domain-containing protein 2 (THAP2) from Homo sapiens (Human).